The chain runs to 182 residues: Large ribosomal subunit protein uL6 (182 aa).

The protein belongs to the universal ribosomal protein uL6 family. In terms of assembly, part of the 50S ribosomal subunit.

This protein binds to the 23S rRNA, and is important in its secondary structure. It is located near the subunit interface in the base of the L7/L12 stalk, and near the tRNA binding site of the peptidyltransferase center. The protein is Large ribosomal subunit protein uL6 of Nostoc sp. (strain PCC 7120 / SAG 25.82 / UTEX 2576).